A 198-amino-acid chain; its full sequence is Glycerol-3-phosphate acyltransferase (198 aa).

A run of 4 helical transmembrane segments spans residues T4–G24, L71–G91, L113–F133, and V147–L167.

It belongs to the PlsY family. As to quaternary structure, probably interacts with PlsX.

The protein resides in the cell membrane. It catalyses the reaction an acyl phosphate + sn-glycerol 3-phosphate = a 1-acyl-sn-glycero-3-phosphate + phosphate. It participates in lipid metabolism; phospholipid metabolism. Catalyzes the transfer of an acyl group from acyl-phosphate (acyl-PO(4)) to glycerol-3-phosphate (G3P) to form lysophosphatidic acid (LPA). This enzyme utilizes acyl-phosphate as fatty acyl donor, but not acyl-CoA or acyl-ACP. In Bacillus cereus (strain G9842), this protein is Glycerol-3-phosphate acyltransferase.